Consider the following 153-residue polypeptide: Large ribosomal subunit protein uL13 (153 aa).

The interval 128 to 153 (SEHPHEAQSPEVLDVTSMNSKNTRSA) is disordered. Positions 143–153 (TSMNSKNTRSA) are enriched in polar residues.

The protein belongs to the universal ribosomal protein uL13 family. Part of the 50S ribosomal subunit.

Functionally, this protein is one of the early assembly proteins of the 50S ribosomal subunit, although it is not seen to bind rRNA by itself. It is important during the early stages of 50S assembly. This is Large ribosomal subunit protein uL13 from Roseobacter denitrificans (strain ATCC 33942 / OCh 114) (Erythrobacter sp. (strain OCh 114)).